Reading from the N-terminus, the 451-residue chain is uncharacterized protein (451 aa).

The disordered stretch occupies residues 415–435 (AHGDTEWLPPPHLDHGQPRVN).

This sequence belongs to the Rv1128c/1148c/1588c/1702c/1945/3466 family.

This is an uncharacterized protein from Mycobacterium tuberculosis (strain ATCC 25618 / H37Rv).